Reading from the N-terminus, the 481-residue chain is 2-succinylbenzoate--CoA ligase (481 aa).

It belongs to the ATP-dependent AMP-binding enzyme family. MenE subfamily.

It catalyses the reaction 2-succinylbenzoate + ATP + CoA = 2-succinylbenzoyl-CoA + AMP + diphosphate. The protein operates within quinol/quinone metabolism; 1,4-dihydroxy-2-naphthoate biosynthesis; 1,4-dihydroxy-2-naphthoate from chorismate: step 5/7. Its pathway is quinol/quinone metabolism; menaquinone biosynthesis. Functionally, converts 2-succinylbenzoate (OSB) to 2-succinylbenzoyl-CoA (OSB-CoA). The chain is 2-succinylbenzoate--CoA ligase from Bacillus cereus (strain Q1).